Reading from the N-terminus, the 66-residue chain is Beta-mammal toxin Cv1 (66 aa).

In terms of domain architecture, LCN-type CS-alpha/beta spans 1-66 (KEGYIVNLST…VWPLPKKTCN (66 aa)). 4 disulfides stabilise this stretch: Cys-12–Cys-65, Cys-16–Cys-41, Cys-25–Cys-46, and Cys-29–Cys-48.

Expressed by the venom gland.

Its subcellular location is the secreted. With respect to regulation, is susceptible to be neutralized by human antibodies scFvs 10FG2 and HV. Functionally, beta toxins bind voltage-independently at site-4 of sodium channels (Nav) and reduces peak current and shifts the voltage of activation toward more negative potentials thereby affecting sodium channel activation and promoting spontaneous and repetitive firing. This toxin is slightly toxic to mice. The chain is Beta-mammal toxin Cv1 from Centruroides villegasi (Scorpion).